A 437-amino-acid polypeptide reads, in one-letter code: Sorting nexin-30 (437 aa).

Positions M1 to M45 are disordered. Position 38 is a phosphothreonine (T38). S40 is modified (phosphoserine). The region spanning R89 to A210 is the PX domain. The a 1,2-diacyl-sn-glycero-3-phospho-(1D-myo-inositol-3-phosphate) site is built by R132, Q134, K162, and R176. Positions K234–K437 constitute a BAR domain.

Belongs to the sorting nexin family. In terms of assembly, heterodimer; heterodimerizes with SNX4.

The protein resides in the early endosome membrane. Functionally, involved in the regulation of endocytosis and in several stages of intracellular trafficking. Together with SNX4, involved in autophagosome assembly. The polypeptide is Sorting nexin-30 (Mus musculus (Mouse)).